Consider the following 286-residue polypeptide: UDP-3-O-acyl-N-acetylglucosamine deacetylase (286 aa).

Zn(2+)-binding residues include H79, H237, and D241. H264 (proton donor) is an active-site residue.

It belongs to the LpxC family. Zn(2+) is required as a cofactor.

The enzyme catalyses a UDP-3-O-[(3R)-3-hydroxyacyl]-N-acetyl-alpha-D-glucosamine + H2O = a UDP-3-O-[(3R)-3-hydroxyacyl]-alpha-D-glucosamine + acetate. It participates in glycolipid biosynthesis; lipid IV(A) biosynthesis; lipid IV(A) from (3R)-3-hydroxytetradecanoyl-[acyl-carrier-protein] and UDP-N-acetyl-alpha-D-glucosamine: step 2/6. Functionally, catalyzes the hydrolysis of UDP-3-O-myristoyl-N-acetylglucosamine to form UDP-3-O-myristoylglucosamine and acetate, the committed step in lipid A biosynthesis. The chain is UDP-3-O-acyl-N-acetylglucosamine deacetylase from Brucella melitensis biotype 2 (strain ATCC 23457).